A 343-amino-acid polypeptide reads, in one-letter code: Heat-inducible transcription repressor HrcA (343 aa).

The protein belongs to the HrcA family.

In terms of biological role, negative regulator of class I heat shock genes (grpE-dnaK-dnaJ and groELS operons). Prevents heat-shock induction of these operons. The polypeptide is Heat-inducible transcription repressor HrcA (Mycolicibacterium gilvum (strain PYR-GCK) (Mycobacterium gilvum (strain PYR-GCK))).